A 79-amino-acid polypeptide reads, in one-letter code: Sec-independent protein translocase protein TatA (79 aa).

The helical transmembrane segment at 1 to 21 (MGEFSLTHILLLAVIFLIFFG) threads the bilayer. The disordered stretch occupies residues 52 to 79 (DIHDNQQVSHQNKQSMGQTQKQGENQNS). Over residues 56–79 (NQQVSHQNKQSMGQTQKQGENQNS) the composition is skewed to polar residues.

Belongs to the TatA/E family. The Tat system comprises two distinct complexes: a TatABC complex, containing multiple copies of TatA, TatB and TatC subunits, and a separate TatA complex, containing only TatA subunits. Substrates initially bind to the TatABC complex, which probably triggers association of the separate TatA complex to form the active translocon.

The protein resides in the cell inner membrane. Functionally, part of the twin-arginine translocation (Tat) system that transports large folded proteins containing a characteristic twin-arginine motif in their signal peptide across membranes. TatA could form the protein-conducting channel of the Tat system. This is Sec-independent protein translocase protein TatA from Bdellovibrio bacteriovorus (strain ATCC 15356 / DSM 50701 / NCIMB 9529 / HD100).